The primary structure comprises 60 residues: Large ribosomal subunit protein bL32 (60 aa).

Belongs to the bacterial ribosomal protein bL32 family.

This is Large ribosomal subunit protein bL32 from Borrelia hermsii (strain HS1 / DAH).